A 260-amino-acid chain; its full sequence is Ubiquinone/menaquinone biosynthesis C-methyltransferase UbiE (260 aa).

Residues Thr83, Asp104, 132 to 133 (NA), and Ser149 each bind S-adenosyl-L-methionine.

The protein belongs to the class I-like SAM-binding methyltransferase superfamily. MenG/UbiE family.

It carries out the reaction a 2-demethylmenaquinol + S-adenosyl-L-methionine = a menaquinol + S-adenosyl-L-homocysteine + H(+). It catalyses the reaction a 2-methoxy-6-(all-trans-polyprenyl)benzene-1,4-diol + S-adenosyl-L-methionine = a 5-methoxy-2-methyl-3-(all-trans-polyprenyl)benzene-1,4-diol + S-adenosyl-L-homocysteine + H(+). It participates in quinol/quinone metabolism; menaquinone biosynthesis; menaquinol from 1,4-dihydroxy-2-naphthoate: step 2/2. The protein operates within cofactor biosynthesis; ubiquinone biosynthesis. Functionally, methyltransferase required for the conversion of demethylmenaquinol (DMKH2) to menaquinol (MKH2) and the conversion of 2-polyprenyl-6-methoxy-1,4-benzoquinol (DDMQH2) to 2-polyprenyl-3-methyl-6-methoxy-1,4-benzoquinol (DMQH2). The polypeptide is Ubiquinone/menaquinone biosynthesis C-methyltransferase UbiE (Vibrio vulnificus (strain CMCP6)).